A 265-amino-acid chain; its full sequence is Putative carbamate hydrolase RutD (265 aa).

The region spanning 14–123 (PTLVLSSGLG…WSSPNPHSAR (110 aa)) is the AB hydrolase-1 domain.

The protein belongs to the AB hydrolase superfamily. Hydrolase RutD family.

It catalyses the reaction carbamate + 2 H(+) = NH4(+) + CO2. Involved in pyrimidine catabolism. May facilitate the hydrolysis of carbamate, a reaction that can also occur spontaneously. This chain is Putative carbamate hydrolase RutD, found in Stutzerimonas stutzeri (strain A1501) (Pseudomonas stutzeri).